The chain runs to 377 residues: UPF0754 membrane protein YheB (377 aa).

Transmembrane regions (helical) follow at residues 1 to 21 and 357 to 377; these read MGIA…GAVT and YLGG…VILF.

It belongs to the UPF0754 family.

Its subcellular location is the cell membrane. This chain is UPF0754 membrane protein YheB (yheB), found in Bacillus subtilis (strain 168).